A 274-amino-acid chain; its full sequence is Sulfur carrier protein FdhD (274 aa).

Catalysis depends on C121, which acts as the Cysteine persulfide intermediate. Residue 258–263 (FSKPGR) coordinates Mo-bis(molybdopterin guanine dinucleotide).

It belongs to the FdhD family.

The protein localises to the cytoplasm. Functionally, required for formate dehydrogenase (FDH) activity. Acts as a sulfur carrier protein that transfers sulfur from IscS to the molybdenum cofactor prior to its insertion into FDH. This chain is Sulfur carrier protein FdhD, found in Yersinia pestis bv. Antiqua (strain Antiqua).